We begin with the raw amino-acid sequence, 158 residues long: Snaclec jerdonuxin subunit alpha (158 aa).

Positions 1–23 (MGRFTFVSFGLLVVFLSLSGTGA) are cleaved as a signal peptide. Intrachain disulfides connect cysteine 27-cysteine 38, cysteine 55-cysteine 152, and cysteine 127-cysteine 144. The C-type lectin domain maps to 34 to 153 (YDRYCYQAFS…CGTENPFVCK (120 aa)).

Belongs to the snaclec family. Tetramer of 4 heterodimers of alpha and beta subunits; disulfide-linked. As to expression, expressed by the venom gland.

It is found in the secreted. In terms of biological role, snaclec that strongly induces platelet aggregation, in a dose-dependent manner. This is Snaclec jerdonuxin subunit alpha from Protobothrops jerdonii (Jerdon's pitviper).